Here is a 192-residue protein sequence, read N- to C-terminus: dTDP-3-amino-3,6-dideoxy-alpha-D-galactopyranose 3-N-acetyltransferase (192 aa).

This sequence belongs to the transferase hexapeptide repeat family.

The enzyme catalyses dTDP-3-amino-3,6-dideoxy-alpha-D-galactopyranose + acetyl-CoA = dTDP-3-acetamido-3,6-dideoxy-alpha-D-galactopyranose + CoA + H(+). Its function is as follows. Catalyzes the transfer of an acetyl group to dTDP-D-Fucp3N to form dTDP-D-Fucp3NAc in the biosynthesis of dTDP-3-acetamido-3,6-dideoxy-alpha-D-galactose, a glycan chain of the S-layer. In Aneurinibacillus thermoaerophilus, this protein is dTDP-3-amino-3,6-dideoxy-alpha-D-galactopyranose 3-N-acetyltransferase (fdtC).